The sequence spans 415 residues: Serine/threonine transporter SstT (415 aa).

The next 8 membrane-spanning stretches (helical) occupy residues isoleucine 21–alanine 41, leucine 45–valine 65, phenylalanine 85–phenylalanine 105, alanine 142–phenylalanine 162, leucine 193–glycine 213, leucine 217–valine 237, valine 289–leucine 309, and valine 331–isoleucine 351.

Belongs to the dicarboxylate/amino acid:cation symporter (DAACS) (TC 2.A.23) family.

The protein resides in the cell inner membrane. The catalysed reaction is L-serine(in) + Na(+)(in) = L-serine(out) + Na(+)(out). It catalyses the reaction L-threonine(in) + Na(+)(in) = L-threonine(out) + Na(+)(out). Functionally, involved in the import of serine and threonine into the cell, with the concomitant import of sodium (symport system). The protein is Serine/threonine transporter SstT of Pectobacterium atrosepticum (strain SCRI 1043 / ATCC BAA-672) (Erwinia carotovora subsp. atroseptica).